The following is a 407-amino-acid chain: Zinc finger protein 552 (407 aa).

The KRAB domain occupies 14–90 (VTFEDVAVKF…PMAGVSPKKA (77 aa)). Residues 91–113 (HPCEMCGPILGDILHVADHQGTH) form a C2H2-type 1 zinc finger. Residues 119–141 (HRCEAWGNKLYDSGNFHQHQNEH) form a C2H2-type 2; degenerate zinc finger. Glycyl lysine isopeptide (Lys-Gly) (interchain with G-Cter in SUMO2) cross-links involve residues Lys176 and Lys198. Residues 212 to 234 (YSCGGCMKHFSTKDILSQHERLL) form a C2H2-type 3; degenerate zinc finger. The C2H2-type 4; degenerate zinc finger occupies 244–262 (ECGKSSSKYDSFSNHQGVH). Glycyl lysine isopeptide (Lys-Gly) (interchain with G-Cter in SUMO2) cross-links involve residues Lys251 and Lys266. 5 C2H2-type zinc fingers span residues 268 to 290 (YTCG…QRIH), 296 to 318 (YECE…QRVH), 324 to 346 (YECS…KRVH), 352 to 374 (YECS…RRVH), and 380 to 402 (YGCS…QRVH). Residue Lys308 forms a Glycyl lysine isopeptide (Lys-Gly) (interchain with G-Cter in SUMO2) linkage.

Belongs to the krueppel C2H2-type zinc-finger protein family.

Its subcellular location is the nucleus. Functionally, may be involved in transcriptional regulation. The polypeptide is Zinc finger protein 552 (ZNF552) (Homo sapiens (Human)).